Consider the following 341-residue polypeptide: uncharacterized protein (341 aa).

WD repeat units follow at residues 19–59, 106–145, 252–293, and 303–341; these read SLGS…QVHT, GHTD…RCLG, PFSN…HHKG, and VSQS…ALTS.

Its subcellular location is the cytoplasm. The protein localises to the nucleus. This is an uncharacterized protein from Schizosaccharomyces pombe (strain 972 / ATCC 24843) (Fission yeast).